Reading from the N-terminus, the 426-residue chain is Chaperone SurA (426 aa).

The first 13 residues, 1 to 13, serve as a signal peptide directing secretion; it reads MLGALFLGTAANA. 2 consecutive PpiC domains span residues 164 to 265 and 274 to 373; these read SEEL…KLLE and RDEV…EVLG.

The protein localises to the periplasm. The enzyme catalyses [protein]-peptidylproline (omega=180) = [protein]-peptidylproline (omega=0). Chaperone involved in the correct folding and assembly of outer membrane proteins. Recognizes specific patterns of aromatic residues and the orientation of their side chains, which are found more frequently in integral outer membrane proteins. May act in both early periplasmic and late outer membrane-associated steps of protein maturation. This is Chaperone SurA from Pseudomonas fluorescens (strain Pf0-1).